The sequence spans 551 residues: Chloride channel CLIC-like protein 1 (551 aa).

The signal sequence occupies residues 1 to 18 (MLCSLLLCECLLLVAGYA). Residues 19–184 (HDDDWIDPTD…EDSFGVDPYN (166 aa)) are Lumenal-facing. A helical transmembrane segment spans residues 185 to 205 (VLMVLLCLLCIVVLVATELWT). Residues 206–216 (YVRWYTQLRRV) lie on the Cytoplasmic side of the membrane. A helical transmembrane segment spans residues 217–237 (LIISFLFSLGWNWMYLYKLAF). Residues 238-329 (AQHQAEVAKM…GEFIKALMKE (92 aa)) lie on the Lumenal side of the membrane. The helical transmembrane segment at 330–350 (IPALLHLPVLIIMALAILSFC) threads the bilayer. Topologically, residues 351 to 551 (YGAGKSVHVL…GQDPVSSPCG (201 aa)) are cytoplasmic. The interval 363-415 (IGGPESEPPQALRPRDRRRQEEIDYRPDGGAGDADFHYRGQMGPTEQGPYAKT) is disordered. Basic and acidic residues predominate over residues 380–389 (RRQEEIDYRP). 2 positions are modified to phosphoserine: Ser438 and Ser464. The tract at residues 447–551 (VPDAEAREHP…GQDPVSSPCG (105 aa)) is disordered. Phosphothreonine is present on Thr482. The span at 488 to 508 (TESSQSAKPVSGQDTSGNTEG) shows a compositional bias: polar residues. 3 positions are modified to phosphoserine: Ser509, Ser524, and Ser532.

This sequence belongs to the chloride channel MCLC family. Homomultimers. Interacts with mitochondrial protein PIGBOS1 (via C-terminus); the interaction occurs at the mitochondria-associated endoplasmic reticulum (ER) membrane, a zone of contact between the ER and mitochondrial membranes, but does not appear to play a role in ER-mitochondria tethering and is not affected by ER stress. Interacts with CALR. As to expression, expressed in the retina of the eye, with extensive expression in the lamina cribrosa, optic nerve, ganglion cell layer, inner nuclear layer, outer nuclear layer and retinal pigment epithelium.

The protein resides in the endoplasmic reticulum membrane. It carries out the reaction chloride(in) = chloride(out). It catalyses the reaction bromide(in) = bromide(out). The catalysed reaction is nitrate(in) = nitrate(out). The enzyme catalyses fluoride(in) = fluoride(out). With respect to regulation, inhibited by ER lumenal Ca(2+). Its function is as follows. Anion-selective channel with Ca(2+)-dependent and voltage-independent gating. Permeable to small monovalent anions with selectivity for bromide &gt; chloride &gt; nitrate &gt; fluoride. Operates in the endoplasmic reticulum (ER) membrane where it mediates chloride efflux to compensate for the loss of positive charges from the ER lumen upon Ca(2+) release. Contributes to the maintenance of ER Ca(2+) pools and activation of unfolded protein response to prevent accumulation of misfolded proteins in the ER lumen. Particularly involved in ER homeostasis mechanisms underlying motor neurons and retinal photoreceptors survival. This is Chloride channel CLIC-like protein 1 from Homo sapiens (Human).